The chain runs to 712 residues: Aryl hydrocarbon receptor nuclear translocator 2 (712 aa).

Residues 36-73 (AGAMPARGGKRRSGMDFDDEDGEGPSKFSRENHSEIER) form a disordered region. An Omega-N-methylarginine modification is found at Arg42. Residues 63–73 (FSRENHSEIER) are compositionally biased toward basic and acidic residues. Residues 63–116 (FSRENHSEIERRRRNKMTQYITELSDMVPTCSALARKPDKLTILRMAVSHMKSM) form the bHLH domain. 2 PAS domains span residues 134–209 (TEQE…MTGR) and 323–393 (PVCM…VKLK). The PAC domain occupies 398-441 (SVMYRFRTKNREWLLIRTSSFTFQNPYSDEIEYVICTNTNVKQL). A disordered region spans residues 573–712 (AWTGSRPPFP…DLGMFPPFSE (140 aa)). 2 stretches are compositionally biased toward low complexity: residues 597 to 626 (SSHPYPADPSSYSPLSSPAASSPSGNAYPS) and 653 to 675 (SQWQSQHHGQQSGEQHSHQQPGQ).

As to quaternary structure, efficient DNA binding requires dimerization with another bHLH protein. Heterodimer with NPAS4 or SIM1. Heterodimer with the aryl hydrocarbon receptor (AHR) or the SIM1 protein. Interacts with TACC3. In terms of tissue distribution, restricted to adult brain and kidney.

Its subcellular location is the nucleus. Functionally, transcription factor that plays a role in the development of the hypothalamo-pituitary axis, postnatal brain growth, and visual and renal function. Specifically recognizes the xenobiotic response element (XRE). This Mus musculus (Mouse) protein is Aryl hydrocarbon receptor nuclear translocator 2 (Arnt2).